The chain runs to 263 residues: Tryptophan synthase alpha chain (263 aa).

Active-site proton acceptor residues include Glu47 and Asp58.

This sequence belongs to the TrpA family. In terms of assembly, tetramer of two alpha and two beta chains.

The protein localises to the plastid. It is found in the chloroplast. The catalysed reaction is (1S,2R)-1-C-(indol-3-yl)glycerol 3-phosphate + L-serine = D-glyceraldehyde 3-phosphate + L-tryptophan + H2O. It participates in amino-acid biosynthesis; L-tryptophan biosynthesis; L-tryptophan from chorismate: step 5/5. Functionally, the alpha subunit is responsible for the aldol cleavage of indoleglycerol phosphate to indole and glyceraldehyde 3-phosphate. The sequence is that of Tryptophan synthase alpha chain from Pyropia yezoensis (Susabi-nori).